We begin with the raw amino-acid sequence, 132 residues long: L-ectoine synthase (132 aa).

This sequence belongs to the ectoine synthase family.

The enzyme catalyses (2S)-4-acetamido-2-aminobutanoate = L-ectoine + H2O. Its pathway is amine and polyamine biosynthesis; ectoine biosynthesis; L-ectoine from L-aspartate 4-semialdehyde: step 3/3. Functionally, catalyzes the circularization of gamma-N-acetyl-alpha,gamma-diaminobutyric acid (ADABA) to ectoine (1,4,5,6-tetrahydro-2-methyl-4-pyrimidine carboxylic acid), which is an excellent osmoprotectant. The chain is L-ectoine synthase from Saccharophagus degradans (strain 2-40 / ATCC 43961 / DSM 17024).